The chain runs to 121 residues: MGRLTMALCWLLLLLLTTQACYITNCPRGGKRDVDDGLGVRPCMFCSFGQCVGPHICCGAGGCEIGTLEASTCHEENENPIPCHVFGDRCLLKHPGNVHGNCVSPGVCCTDDTCSMHVGCL.

Residues Met1–Ala20 form the signal peptide. Cys21 and Cys26 are disulfide-bonded. A 4-hydroxyproline; partial; in Conopressin-ba1c modification is found at Pro27. At Gly29 the chain carries Glycine amide. 7 disulfides stabilise this stretch: Cys43–Cys83, Cys46–Cys57, Cys51–Cys73, Cys58–Cys63, Cys90–Cys108, Cys102–Cys120, and Cys109–Cys114.

The protein belongs to the vasopressin/oxytocin family. In terms of tissue distribution, expressed by the venom duct.

The protein resides in the secreted. This Conus bayani (Bayan's cone) protein is Conopressin-conophysin.